Here is a 322-residue protein sequence, read N- to C-terminus: Putative T-box protein 11 (322 aa).

The segment at residues 16–185 (LWRSCHEYDN…NNPYSTGSRK (170 aa)) is a DNA-binding region (T-box). Residues 171–182 (TLKTNNNPYSTG) are compositionally biased toward polar residues. The interval 171-214 (TLKTNNNPYSTGSRKDRRRERQSPVYSEGTSSEKSISPPPAKKI) is disordered.

It is found in the nucleus. This is Putative T-box protein 11 (tbx-11) from Caenorhabditis elegans.